The sequence spans 1502 residues: Rho GTPase-activating protein 5 (1502 aa).

FF domains follow at residues 267–325 (QLVV…HIEQ), 366–420 (KLME…HVQH), 427–481 (RVEM…HQRE), and 482–548 (IVEK…HIGF). Tyr-550 carries the post-translational modification 3'-nitrotyrosine. Phosphoserine occurs at positions 590 and 765. A pG1 pseudoGTPase domain is found at 590–763 (STNIDKVNLF…LESVKHNLDV (174 aa)). The pG2 pseudoGTPase domain occupies 779–944 (RIVMCAMCGD…FSDVLEKKNM (166 aa)). A phosphoserine mark is found at Ser-951 and Ser-968. Disordered stretches follow at residues 975 to 1004 (YNNY…LPTP), 1022 to 1050 (HSTP…PKTN), and 1069 to 1089 (NPRK…DPSD). Pro residues predominate over residues 1036–1045 (VPPPIKPKPV). Ser-1115 is subject to Phosphoserine. Disordered regions lie at residues 1125 to 1156 (FVNN…YKYK) and 1168 to 1254 (YRRT…TRRN). Residues 1140–1150 (RTSKSHGERRP) show a composition bias toward basic and acidic residues. Phosphoserine occurs at positions 1173, 1176, 1195, 1202, and 1218. A Rho-GAP domain is found at 1262-1449 (MPLQDLVTAE…TFIQQCQFFF (188 aa)).

May interact with RASA1/p120GAP. In terms of tissue distribution, detected in skin fibroblasts (at protein level).

The protein localises to the cytoplasm. Its subcellular location is the cell membrane. GTPase-activating protein for Rho family members. The sequence is that of Rho GTPase-activating protein 5 (ARHGAP5) from Homo sapiens (Human).